Consider the following 381-residue polypeptide: Glycerophosphocholine acyltransferase 1 (381 aa).

The Cytoplasmic portion of the chain corresponds to 1 to 63 (MANNEDSNSN…IAKQAEEHER (63 aa)). A helical transmembrane segment spans residues 64 to 84 (FINKVTHLVGVLGFGGFCFLL). Over 85–89 (GARPQ) the chain is Lumenal. The chain crosses the membrane as a helical span at residues 90–110 (DIPLVYCFFYVIFVPLRWIYY). At 111–116 (RFKKWH) the chain is on the cytoplasmic side. Residues 117 to 137 (YYLLDFCYYANTIFLVDLLLY) form a helical membrane-spanning segment. Over 138–141 (PKNE) the chain is Lumenal. Residues 142–162 (KLFMVCFSFAEGPLAWAIIVW) form a helical membrane-spanning segment. Residues 163–173 (RCSLVFSSPDK) are Cytoplasmic-facing. A helical transmembrane segment spans residues 174 to 194 (IVSVLIHLLPGLVFFTIRWWN). Residues 195-223 (PATFAAMHPVGTDRRVSWPYVEDKAYLFT) are Lumenal-facing. Residues 224–244 (WLFLVPLVVYTLWQVLYFLIV) form a helical membrane-spanning segment. The Cytoplasmic portion of the chain corresponds to 245–291 (NVLRRQRLLRDPEVMTSYRELSKKAEKANNKLWQLSGLLGDQNRIWM). Residues 292 to 312 (YILFQAIFTVATMALTVPIFL) form a helical membrane-spanning segment. The Lumenal segment spans residues 313–315 (SYR). The helical transmembrane segment at 316-336 (LHVIFQILKISAAVWNGGSFL) threads the bilayer. The Cytoplasmic portion of the chain corresponds to 337-381 (LEVMPRQVIQKEKKKKAEMQPIEEQILHHEAVSHPTENEPKSTET).

It belongs to the GPC1 family.

It is found in the membrane. It carries out the reaction sn-glycerol 3-phosphocholine + an acyl-CoA = a 1-acyl-sn-glycero-3-phosphocholine + CoA. It catalyses the reaction sn-glycero-3-phosphoethanolamine + an acyl-CoA = a monoacyl-sn-glycero-3-phosphoethanolamine + CoA. The catalysed reaction is sn-glycerol 3-phosphocholine + (9Z)-octadecenoyl-CoA = (9Z-octadecenoyl)-sn-glycero-3-phosphocholine + CoA. In terms of biological role, glycerophosphocholine acyltransferase (GPCAT) that utilizes acyl-CoA to acylate glycero-3-phosphocholine (GPC), forming lysophosphatidylcholine (LPC). Shows broad acyl specificities with a preference for 16:0-CoA, polyunsaturated acyl-CoA, and the hydroxylated ricinoleoyl-CoA. Also catalyzes the acylation of glycero-3-phosphoethanolamine (GPE) with acyl-CoA. In addition to acyl-CoA, GPCAT efficiently utilizes LPC and lysophosphatidylethanolamine (LPE) as acyl donors in the acylation of GPC. Contributes to the maintenance of phosphatidylcholine (PC) homeostasis and might also have specific functions in acyl editing of PC, such as transferring acyl groups modified at the sn-2 position of PC to the sn-1. The protein is Glycerophosphocholine acyltransferase 1 of Arabidopsis thaliana (Mouse-ear cress).